The chain runs to 206 residues: Holliday junction branch migration complex subunit RuvA (206 aa).

The segment at 1 to 64 (MIAKLTGLLD…EDNIQLFGFA (64 aa)) is domain I. A domain II region spans residues 65–143 (DTEERDWFRL…SFGAPAPAAA (79 aa)). Positions 144–154 (TAGKGGAAPAG) are flexible linker. Residues 154–206 (GPAGAVADAVSALVNLGYRRVEAFTAVNAVAQRLGPEAGVSDLIRAGLKELSP) form a domain III region.

The protein belongs to the RuvA family. Homotetramer. Forms an RuvA(8)-RuvB(12)-Holliday junction (HJ) complex. HJ DNA is sandwiched between 2 RuvA tetramers; dsDNA enters through RuvA and exits via RuvB. An RuvB hexamer assembles on each DNA strand where it exits the tetramer. Each RuvB hexamer is contacted by two RuvA subunits (via domain III) on 2 adjacent RuvB subunits; this complex drives branch migration. In the full resolvosome a probable DNA-RuvA(4)-RuvB(12)-RuvC(2) complex forms which resolves the HJ.

The protein resides in the cytoplasm. Functionally, the RuvA-RuvB-RuvC complex processes Holliday junction (HJ) DNA during genetic recombination and DNA repair, while the RuvA-RuvB complex plays an important role in the rescue of blocked DNA replication forks via replication fork reversal (RFR). RuvA specifically binds to HJ cruciform DNA, conferring on it an open structure. The RuvB hexamer acts as an ATP-dependent pump, pulling dsDNA into and through the RuvAB complex. HJ branch migration allows RuvC to scan DNA until it finds its consensus sequence, where it cleaves and resolves the cruciform DNA. The polypeptide is Holliday junction branch migration complex subunit RuvA (Rhodospirillum centenum (strain ATCC 51521 / SW)).